We begin with the raw amino-acid sequence, 249 residues long: MATLRVQPEAQAKVDVFREDLCTKTENLLGSYFPKKISELDAFLKEPALNEANLSNLKAPLDIPVPDPVKEKEKGERKKQQEKEDKDEKKKGEDEDKGPPCGPVNCNEKILVLLQRLKPEIKDVIEQLNLVTTWLQLQIPRIEDGNNFGVAVQEKVFELMTSLHTKLEGFHTQISKYFSERGDAVTKAAKQPHVGDYRQLVHELDEAEYRDIRLMVMEIRNAYAVLYDIILKNFEKLKKPRGETKGMIY.

A disordered region spans residues Pro-60–Cys-101. Over residues Pro-68–Gly-98 the composition is skewed to basic and acidic residues.

Belongs to the PA28 family. As to quaternary structure, heterodimer of PSME1 and PSME2, which forms a hexameric ring. PSME1 can form homoheptamers.

In terms of biological role, implicated in immunoproteasome assembly and required for efficient antigen processing. The PA28 activator complex enhances the generation of class I binding peptides by altering the cleavage pattern of the proteasome. The sequence is that of Proteasome activator complex subunit 1 (PSME1) from Macaca fascicularis (Crab-eating macaque).